A 432-amino-acid polypeptide reads, in one-letter code: Trigger factor (432 aa).

One can recognise a PPIase FKBP-type domain in the interval 162–247; that stretch reads GDLVKFDYQG…VKEVQAPVLP (86 aa).

Belongs to the FKBP-type PPIase family. Tig subfamily.

It is found in the cytoplasm. It catalyses the reaction [protein]-peptidylproline (omega=180) = [protein]-peptidylproline (omega=0). In terms of biological role, involved in protein export. Acts as a chaperone by maintaining the newly synthesized protein in an open conformation. Functions as a peptidyl-prolyl cis-trans isomerase. This is Trigger factor from Thiobacillus denitrificans (strain ATCC 25259 / T1).